Consider the following 482-residue polypeptide: tRNA sulfurtransferase (482 aa).

Residues 61–165 (PVIADALTRI…NDKLMLVKAR (105 aa)) enclose the THUMP domain. Residues 183–184 (LI), lysine 265, glycine 287, and glutamine 296 each bind ATP. Cysteine 344 and cysteine 456 are oxidised to a cystine. The Rhodanese domain occupies 404-482 (FDADQVILDI…GFTNVKVYRP (79 aa)). Cysteine 456 (cysteine persulfide intermediate) is an active-site residue.

Belongs to the ThiI family.

It localises to the cytoplasm. The catalysed reaction is [ThiI sulfur-carrier protein]-S-sulfanyl-L-cysteine + a uridine in tRNA + 2 reduced [2Fe-2S]-[ferredoxin] + ATP + H(+) = [ThiI sulfur-carrier protein]-L-cysteine + a 4-thiouridine in tRNA + 2 oxidized [2Fe-2S]-[ferredoxin] + AMP + diphosphate. It catalyses the reaction [ThiS sulfur-carrier protein]-C-terminal Gly-Gly-AMP + S-sulfanyl-L-cysteinyl-[cysteine desulfurase] + AH2 = [ThiS sulfur-carrier protein]-C-terminal-Gly-aminoethanethioate + L-cysteinyl-[cysteine desulfurase] + A + AMP + 2 H(+). It functions in the pathway cofactor biosynthesis; thiamine diphosphate biosynthesis. In terms of biological role, catalyzes the ATP-dependent transfer of a sulfur to tRNA to produce 4-thiouridine in position 8 of tRNAs, which functions as a near-UV photosensor. Also catalyzes the transfer of sulfur to the sulfur carrier protein ThiS, forming ThiS-thiocarboxylate. This is a step in the synthesis of thiazole, in the thiamine biosynthesis pathway. The sulfur is donated as persulfide by IscS. The polypeptide is tRNA sulfurtransferase (Serratia proteamaculans (strain 568)).